A 158-amino-acid polypeptide reads, in one-letter code: MNFDDYFCKLQCCYWREFEFAYSKLDVKDKTITIIGNDCGSSALYFLLKGAKKIIGFEKEEKLNQIFKETVCKEFKICDKVESKGEWKSNEYPDTDILVMDCEGCEKNLDFSKLQKYKQYCIAIHDWTENRFDLLRKLYGTILTFVTDDNREFVFCKL.

This is an uncharacterized protein from Saccharolobus islandicus (Sulfolobus islandicus).